Here is a 61-residue protein sequence, read N- to C-terminus: Large ribosomal subunit protein bL32 (61 aa).

Over residues 1–16 the composition is skewed to basic residues; the sequence is MAVPKRKTSPSKRGMR. The interval 1 to 61 is disordered; the sequence is MAVPKRKTSP…RQVLTPKESA (61 aa). Residues 28–44 are compositionally biased toward basic and acidic residues; sequence VEDKNSGELRRPHHIDL.

It belongs to the bacterial ribosomal protein bL32 family.

The protein is Large ribosomal subunit protein bL32 of Rhizobium etli (strain CIAT 652).